Reading from the N-terminus, the 589-residue chain is Coronatine-insensitive protein homolog 2 (589 aa).

The 42-residue stretch at 18-59 (IPDVALGLVMGFVEDPWDRDAISLVCRHWCRVDALSRKHVTV) folds into the F-box domain. 4 residues coordinate jasmonate: R87, R352, R414, and R501.

Interacts with TIFY9/JAZ5, TIFY11C/JAZ11 and TIFY11D/JAZ12 in a coronatine-dependent manner.

Functionally, involved in jasmonate (JA) signaling. Required for jasmonate signaling in plant defense responses. Component of SCF(COI1) E3 ubiquitin ligase complexes, which may mediate the ubiquitination and subsequent proteasomal degradation of target proteins, including TIFY/JAZ family. This Oryza sativa subsp. indica (Rice) protein is Coronatine-insensitive protein homolog 2.